Consider the following 2715-residue polypeptide: Teneurin-3 (2715 aa).

Disordered stretches follow at residues 1-38 (MDVKERRPYCSLTKSRREKERRYTNSSADNEECRVPTQ) and 142-223 (GRSS…AALP). In terms of domain architecture, Teneurin N-terminal spans 1–309 (MDVKERRPYC…KSSKYCSWRC (309 aa)). Residues 1–310 (MDVKERRPYC…SSKYCSWRCT (310 aa)) lie on the Cytoplasmic side of the membrane. Residues 142 to 153 (GRSSCLSSRSNS) show a composition bias toward low complexity. Positions 159–168 (DTEHENRSDS) are enriched in basic and acidic residues. The segment covering 171 to 182 (EQPSNNPGQPTL) has biased composition (polar residues). Low complexity predominate over residues 201-213 (TSLNRNSLTNRRN). A helical membrane pass occupies residues 311-331 (ALCAVGVSVLLAILLSYFIAM). The Extracellular segment spans residues 332–2715 (HLFGLNWHLQ…FLRQSEIGKR (2384 aa)). 3 N-linked (GlcNAc...) asparagine glycosylation sites follow: Asn-345, Asn-380, and Asn-419. EGF-like domains lie at 514-545 (SVVECPRNCHGNGECVSGTCHCFPGFLGPDCS), 546-576 (RAACPVLCSGNGQYSKGRCLCFSGWKGTECD), 578-610 (PTTQCIDPQCGGRGICIMGSCACNSGYKGENCE), 611-642 (EADCLDPGCSNHGVCIHGECHCNPGWGGSNCE), 644-677 (LKTMCADQCSGHGTYLQESGSCTCDPNWTGPDCS), 678-709 (NEICSVDCGSHGVCMGGSCRCEEGWTGPACNQ), 710-739 (RACHPRCAEHGTCKDGKCECSQGWNGEHCT), and 740-783 (IAHY…AGCD). Intrachain disulfides connect Cys-518–Cys-528, Cys-522–Cys-533, Cys-535–Cys-544, Cys-553–Cys-564, Cys-566–Cys-575, Cys-582–Cys-593, Cys-587–Cys-598, Cys-600–Cys-609, Cys-614–Cys-625, Cys-619–Cys-630, Cys-632–Cys-641, Cys-652–Cys-665, Cys-667–Cys-676, Cys-681–Cys-691, Cys-685–Cys-696, Cys-698–Cys-707, Cys-712–Cys-722, Cys-716–Cys-727, Cys-729–Cys-738, Cys-752–Cys-762, Cys-756–Cys-771, and Cys-773–Cys-782. An N-linked (GlcNAc...) asparagine glycan is attached at Asn-670. Asn-869 and Asn-892 each carry an N-linked (GlcNAc...) asparagine glycan. One copy of the NHL 1 repeat lies at 1181-1209 (LLAPVALACGIDGSLYVGDFNYVRRIFPS). A glycan (N-linked (GlcNAc...) asparagine) is linked at Asn-1211. NHL repeat units lie at residues 1216–1260 (LELR…PKSL), 1286–1330 (ARCG…NGII), 1347–1387 (CDTS…ITEN), 1418–1445 (LESATAIAVSYSGVLYITETDEKKINRI), and 1474–1517 (CYQS…VSKN). One copy of the YD 1 repeat lies at 1527–1546 (YEVASPTDQELYIFDINGTH). 2 N-linked (GlcNAc...) asparagine glycosylation sites follow: Asn-1543 and Asn-1560. 3 YD repeats span residues 1563-1583 (YSNDNDVTAVTDSNGNTLRIR), 1626-1645 (YHGNSGLLATKSDETGWTTF), and 1646-1668 (FDYDSEGRLTNVTFPTGVVTNLH). Asn-1656, Asn-1693, Asn-1751, and Asn-1836 each carry an N-linked (GlcNAc...) asparagine glycan. YD repeat units follow at residues 1839–1858 (YSSTGQIASIQRGTTSEKVD), 1880–1898 (YLEKSMVLLLHSQRQYIFE), 1899–1919 (YDMWDRLSAITMPSVARHTMQ), 1926–1943 (YYRNIYNPPESNASIITD), 1944–1965 (YNEEGLLLQTAFLGTSRRVLFK), 1966–1983 (YRRQTRLSEILYDSTRVS), 1986–2006 (YDETAGVLKTVNLQSDGFICT), 2009–2029 (YRQIGPLIDRQIFRFSEDGMV), 2037–2056 (YDNSFRVTSMQGVINETPLP), 2062–2079 (FDDISGKVEQFGKFGVIY), 2080–2106 (YDINQIISTAVMTYTKHFDAHGRIKEI), 2108–2121 (YEIFRSLMYWITIQ), 2122–2145 (YDNMGRVTKREIKIGPFANTTKYA), 2148–2168 (YDVDGQLQTVYLNEKIMWRYN), 2169–2189 (YDLNGNLHLLNPSSSARLTPL), 2191–2211 (YDLRDRITRLGDVQYRLDEDG), 2223–2243 (YSSKGLLTRVYSKGSGWTVIY), and 2245–2265 (YDGLGRRVSSKTSLGQHLQFF). N-linked (GlcNAc...) asparagine glycosylation is present at Asn-1937. Residue Asn-2140 is glycosylated (N-linked (GlcNAc...) asparagine). Residue Asn-2280 is glycosylated (N-linked (GlcNAc...) asparagine). The stretch at 2291–2332 (YDLQGHLFAMEISSGDEFYIASDNTGTPLAVFSSNGLMLKQT) is one YD 23 repeat. N-linked (GlcNAc...) asparagine glycosylation occurs at Asn-2592.

The protein belongs to the tenascin family. Teneurin subfamily. In terms of assembly, homodimer; disulfide-linked; to mediate homophilic cell adhesion. Most isoforms (isoform-type A and type-B) can mediate homophilic interaction. Heterodimer with either TENM1 or TENM2. May also form heterodimer with TENM4. Isoform A0B0: Does not form homodimer to mediate homophilic cell adhesion. Isoform A0B0: Heterodimer with ADGRL3. In terms of tissue distribution, in brain, expressed in highly specific regions of the postnatal brain: expressed in restricted domains of the developing hippocampal region, including proximal CA1, distal subiculum, and medial entorhinal cortex (at protein level). Expression matches with topographic connectivity between entorhinal cortex, CA1, and subiculum (at protein level). Also specifically expressed in subregions of the presubiculum, parasubiculum, medial mammillary nucleus and anteroventral thalamic nucleus that are topographically connected with subiculum or entorhinal cortex (at protein level). Expressed in neurons of the developing visual pathway (at protein level). Expressed in the dorsal and ventral lateral geniculate nucleus (dLGN and vLGN) and optic tract at birth. Expressed in ipsilateral retinal axons of terminal zones (TZs) in the developing superior colliculus (SC) throughout the first postnatal week. Expressed in the layer V of the visual caudal cortex. Expressed in the femoral and mandibular condylar cartilages. Strongly expressed in fibrous and proliferating chondrocytes. Poorly expressed in mature chondrocytes. Not expressed in hypertrophic chondrocytes.

The protein resides in the cell membrane. It is found in the cell projection. The protein localises to the axon. Involved in neural development by regulating the establishment of proper connectivity within the nervous system. Acts in both pre- and postsynaptic neurons in the hippocampus to control the assembly of a precise topographic projection: required in both CA1 and subicular neurons for the precise targeting of proximal CA1 axons to distal subiculum, probably by promoting homophilic cell adhesion. Promotes homophilic adhesion in a splicing isoform-dependent manner: most isoforms (isoform-type A and type-B) can mediate homophilic interaction. Promotes axon guidance. Required for proper dendrite morphogenesis and axon targeting in the vertebrate visual system, thereby playing a key role in the development of the visual pathway. Regulates the formation in ipsilateral retinal mapping to both the dorsal lateral geniculate nucleus (dLGN) and the superior colliculus (SC). May also be involved in the differentiation of the fibroblast-like cells in the superficial layer of mandibular condylar cartilage into chondrocytes. This chain is Teneurin-3, found in Mus musculus (Mouse).